The chain runs to 295 residues: Bifunctional protein FolD (295 aa).

NADP(+) is bound by residues 166–168 (GRS), Ser191, and Ile232.

Belongs to the tetrahydrofolate dehydrogenase/cyclohydrolase family. As to quaternary structure, homodimer.

It carries out the reaction (6R)-5,10-methylene-5,6,7,8-tetrahydrofolate + NADP(+) = (6R)-5,10-methenyltetrahydrofolate + NADPH. It catalyses the reaction (6R)-5,10-methenyltetrahydrofolate + H2O = (6R)-10-formyltetrahydrofolate + H(+). The protein operates within one-carbon metabolism; tetrahydrofolate interconversion. Catalyzes the oxidation of 5,10-methylenetetrahydrofolate to 5,10-methenyltetrahydrofolate and then the hydrolysis of 5,10-methenyltetrahydrofolate to 10-formyltetrahydrofolate. This is Bifunctional protein FolD from Wolbachia sp. subsp. Brugia malayi (strain TRS).